Reading from the N-terminus, the 676-residue chain is MAAASSPPRAERKRWGWGRLPGARRGSAGLAKKCPFSLELAEGGPAGGALYAPIAPGAPGPAPPASPAAPAAPPVASDLGPRPPVSLDPRVSIYSTRRPVLARTHVQGRVYNFLERPTGWKCFVYHFAVFLIVLVCLIFSVLSTIEQYAALATGTLFWMEIVLVVFFGTEYVVRLWSAGCRSKYVGLWGRLRFARKPISIIDLIVVVASMVVLCVGSKGQVFATSAIRGIRFLQILRMLHVDRQGGTWRLLGSVVFIHRQELITTLYIGFLGLIFSSYFVYLAEKDAVNESGRVEFGSYADALWWGVVTVTTIGYGDKVPQTWVGKTIASCFSVFAISFFALPAGILGSGFALKVQQKQRQKHFNRQIPAAASLIQTAWRCYAAENPDSSTWKIYIRKAPRSHTLLSPSPKPKKSVVVKKKKFKLDKDNGVTPGEKMLTVPHITCDPPEERRLDHFSVDGYDSSVRKSPTLLEVSMPHFMRTNSFAEDLDLEGETLLTPITHISQLREHHRATIKVIRRMQYFVAKKKFQQARKPYDVRDVIEQYSQGHLNLMVRIKELQRRLDQSIGKPSLFISVSEKSKDRGSNTIGARLNRVEDKVTQLDQRLALITDMLHQLLSLHGGSTPGSGGPPREGGAHITQPCGSGGSVDPELFLPSNTLPTYEQLTVPRRGPDEGS.

Disordered stretches follow at residues 1-28 (MAAA…RGSA) and 62-84 (APPA…PRPP). At 1-120 (MAAASSPPRA…YNFLERPTGW (120 aa)) the chain is on the cytoplasmic side. Ser27 bears the Phosphoserine; by PKA mark. The segment covering 62–73 (APPASPAAPAAP) has biased composition (pro residues). Residues 121-142 (KCFVYHFAVFLIVLVCLIFSVL) traverse the membrane as a helical segment. Residues 143–153 (STIEQYAALAT) are Extracellular-facing. A helical transmembrane segment spans residues 154 to 176 (GTLFWMEIVLVVFFGTEYVVRLW). Topologically, residues 177–192 (SAGCRSKYVGLWGRLR) are cytoplasmic. Residues 193 to 218 (FARKPISIIDLIVVVASMVVLCVGSK) form a helical membrane-spanning segment. The Extracellular segment spans residues 219-226 (GQVFATSA). The helical; Voltage-sensor transmembrane segment at 227-242 (IRGIRFLQILRMLHVD) threads the bilayer. The tract at residues 238–246 (MLHVDRQGG) is interaction with KCNE3. Residues 243 to 260 (RQGGTWRLLGSVVFIHRQ) lie on the Cytoplasmic side of the membrane. Gln244 provides a ligand contact to a 1,2-diacyl-sn-glycero-3-phospho-(1D-myo-inositol-4,5-bisphosphate). The chain crosses the membrane as a helical span at residues 261–283 (ELITTLYIGFLGLIFSSYFVYLA). Residues 284–299 (EKDAVNESGRVEFGSY) are Extracellular-facing. Asn289 carries N-linked (GlcNAc...) asparagine glycosylation. The segment at residues 300 to 320 (ADALWWGVVTVTTIGYGDKVP) is an intramembrane region (pore-forming). The Extracellular portion of the chain corresponds to 321–322 (QT). A helical transmembrane segment spans residues 323-348 (WVGKTIASCFSVFAISFFALPAGILG). Over 349–676 (SGFALKVQQK…VPRRGPDEGS (328 aa)) the chain is Cytoplasmic. Positions 370-382 (AAASLIQTAWRCY) are interaction with CALM. A phosphoserine mark is found at Ser407 and Ser409. An interaction with CALM; calcium-dependent region spans residues 515–529 (KVIRRMQYFVAKKKF). The interval 535–572 (PYDVRDVIEQYSQGHLNLMVRIKELQRRLDQSIGKPSL) is interaction with KCNE1 C-terminus. Residues 585-621 (SNTIGARLNRVEDKVTQLDQRLALITDMLHQLLSLHG) adopt a coiled-coil conformation. An interaction with AKAP9 region spans residues 588–616 (IGARLNRVEDKVTQLDQRLALITDMLHQL). The tract at residues 589-620 (GARLNRVEDKVTQLDQRLALITDMLHQLLSLH) is C-terminal assembly domain (tetramerization). The interval 620–676 (HGGSTPGSGGPPREGGAHITQPCGSGGSVDPELFLPSNTLPTYEQLTVPRRGPDEGS) is disordered. Gly residues predominate over residues 623–632 (STPGSGGPPR). The span at 655-664 (PSNTLPTYEQ) shows a compositional bias: polar residues.

It belongs to the potassium channel family. KQT (TC 1.A.1.15) subfamily. Kv7.1/KCNQ1 sub-subfamily. Tetramer. Heterotetramer with KCNE1; targets to the membrane raft. Interacts (via C-terminus) with calmodulin; forms a heterooctameric structure (with 4:4 KCNQ1:CALM stoichiometry); the interaction is calcium-independent, constitutive, participates in the proper assembly of a functional channel and also acts a calcium sensor. KCNQ1 channels interact more strongly with Ca(2+)-CALM than with apoCALM. Interacts with AKAP9; targets protein kinase A (PKA) catalytic and regulatory subunits and protein phosphatase 1 (PP1) to the KCNQ1-KCNE1 complex, allowing PKA-mediated phosphorylation and increase of delayed rectifier potassium channel activity. Interacts with KCNE2; forms a heterooligomer complex that targets to the membrane raft and leading to currents with an apparently instantaneous activation, a rapid deactivation process and a linear current-voltage relationship and decreases the amplitude of the outward current. Interacts with AP2M1; mediates estrogen-induced internalization via clathrin-coated vesicles. Interacts with NEDD4L; promotes internalization and decreases I(Ks) currents. Interacts with USP2; counteracts the NEDD4L-specific down-regulation of I(Ks) and restore plasma membrane localization. Heterotetramer with KCNQ5; has a voltage-gated potassium channel activity. Interacts with KCNE3; four KCNE3 molecules are bound to one KCNQ1 tetramer (4:4 KCNQ1:KCNE3 stoichiometry); alters membrane raft localization; affects KCNQ1 structure and gating properties. Interacts with KCNE4; impairs KCNQ1 localization in lipid rafts and inhibits voltage-gated potassium channel activity. Interacts with KCNE5; impairs KCNQ1 localization in lipid rafts and only conducts current upon strong and continued depolarization. Interacts with SLC5A3; forms coregulatory channel-transporter complexes that modulate Na(+)-coupled myo-inositol influx through the transporter. Post-translationally, phosphorylation at Ser-27 by PKA; increases delayed rectifier potassium channel activity of the KCNQ1-KCNE1 complex through a macromolecular complex that includes PKA, PP1, and the targeting protein AKAP9. In terms of processing, ubiquitinated by NEDD4L; promotes internalization. The ubiquitinylated form is internalized through a clathrin-mediated endocytosis by interacting with AP2M1 and is recycled back to the cell membrane via RAB4A and RAB11A. Deubiquitinated by USP2; counteracts the NEDD4L-specific down-regulation of I(Ks) and restores the membrane localization. Abundantly expressed in heart, pancreas, prostate, kidney, small intestine and peripheral blood leukocytes. Less abundant in placenta, lung, spleen, colon, thymus, testis and ovaries.

The protein localises to the cell membrane. The protein resides in the cytoplasmic vesicle membrane. Its subcellular location is the early endosome. It localises to the membrane raft. It is found in the endoplasmic reticulum. The protein localises to the basolateral cell membrane. The protein resides in the apical cell membrane. The catalysed reaction is K(+)(in) = K(+)(out). With respect to regulation, PIP2 molecule is essential to activate KCNQ channels by inducing the coupling of the voltage-sensing domain (VSD) and the pore-forming domain (PD). Upon channel activation, PIP2 disrupts the VSD-calmodulin/CALM interactions, causing the release of CALM from the VSD which triggers the opening of the gate. Calcium potentiates KCNQ1 channel current through calcium-bound CALM. Calcium-bound CALM competes with PIP2 to stabilize the channel open state. In terms of biological role, pore-forming subunit of the voltage-gated potassium (Kv) channel involved in the regulation of cardiomyocyte excitability and important in normal development and functions of myocardium, inner ear, stomach and colon. Associates with KCNE beta subunits that modulates current kinetics. Induces a voltage-dependent current by rapidly activating and slowly deactivating potassium-selective outward current. Also promotes a delayed voltage activated potassium current showing outward rectification characteristic. During beta-adrenergic receptor stimulation, participates in cardiac repolarization by associating with KCNE1 to form the I(Ks) cardiac potassium current that increases the amplitude and slows down the activation kinetics of outward potassium current I(Ks). Muscarinic agonist oxotremorine-M strongly suppresses KCNQ1/KCNE1 current. When associated with KCNE3, forms the potassium channel that is important for cyclic AMP-stimulated intestinal secretion of chloride ions. This interaction with KCNE3 is reduced by 17beta-estradiol, resulting in the reduction of currents. During conditions of increased substrate load, maintains the driving force for proximal tubular and intestinal sodium ions absorption, gastric acid secretion, and cAMP-induced jejunal chloride ions secretion. Allows the provision of potassium ions to the luminal membrane of the secretory canaliculus in the resting state as well as during stimulated acid secretion. When associated with KCNE2, forms a heterooligomer complex leading to currents with an apparently instantaneous activation, a rapid deactivation process and a linear current-voltage relationship and decreases the amplitude of the outward current. When associated with KCNE4, inhibits voltage-gated potassium channel activity. When associated with KCNE5, this complex only conducts current upon strong and continued depolarization. Also forms a heterotetramer with KCNQ5; has a voltage-gated potassium channel activity. Binds with phosphatidylinositol 4,5-bisphosphate. KCNQ1-KCNE2 channel associates with Na(+)-coupled myo-inositol symporter in the apical membrane of choroid plexus epithelium and regulates the myo-inositol gradient between blood and cerebrospinal fluid with an impact on neuron excitability. Its function is as follows. Non-functional alone but modulatory when coexpressed with the full-length isoform 1. The protein is Potassium voltage-gated channel subfamily KQT member 1 of Homo sapiens (Human).